Reading from the N-terminus, the 388-residue chain is L-lactate dehydrogenase (388 aa).

In terms of domain architecture, FMN hydroxy acid dehydrogenase spans 1 to 380 (MIISAASDYR…SADALSRVTR (380 aa)). Tyr24 provides a ligand contact to substrate. Residues Ser106 and Gln127 each contribute to the FMN site. Tyr129 lines the substrate pocket. Thr155 contacts FMN. Arg164 contacts substrate. FMN is bound at residue Lys251. The active-site Proton acceptor is His275. Arg278 is a substrate binding site. 306–330 (DSGIRSGLDVVRMLALGADAVLLGR) contributes to the FMN binding site.

It belongs to the FMN-dependent alpha-hydroxy acid dehydrogenase family. It depends on FMN as a cofactor.

It is found in the cell inner membrane. The catalysed reaction is (S)-lactate + A = pyruvate + AH2. Catalyzes the conversion of L-lactate to pyruvate. Is coupled to the respiratory chain. The protein is L-lactate dehydrogenase of Xanthomonas oryzae pv. oryzae (strain MAFF 311018).